Consider the following 159-residue polypeptide: Cytochrome c-type biogenesis protein CcmE (159 aa).

The Cytoplasmic portion of the chain corresponds to 1–8; that stretch reads MNIRRKNR. Residues 9-29 form a helical; Signal-anchor for type II membrane protein membrane-spanning segment; that stretch reads LWIACAVLAGLALTIGLVLYA. The Periplasmic portion of the chain corresponds to 30 to 159; sequence LRSNIDLFYT…PASVYKDPAS (130 aa). The heme site is built by histidine 130 and tyrosine 134. Residues 132 to 147 show a composition bias toward basic and acidic residues; the sequence is ENYTPPEVEKAMEANH. The tract at residues 132-159 is disordered; sequence ENYTPPEVEKAMEANHRRPASVYKDPAS.

It belongs to the CcmE/CycJ family.

It is found in the cell inner membrane. In terms of biological role, heme chaperone required for the biogenesis of c-type cytochromes. Transiently binds heme delivered by CcmC and transfers the heme to apo-cytochromes in a process facilitated by CcmF and CcmH. In Shigella sonnei (strain Ss046), this protein is Cytochrome c-type biogenesis protein CcmE.